The following is a 144-amino-acid chain: Large ribosomal subunit protein uL16 (144 aa).

Belongs to the universal ribosomal protein uL16 family. In terms of assembly, part of the 50S ribosomal subunit.

Its function is as follows. Binds 23S rRNA and is also seen to make contacts with the A and possibly P site tRNAs. In Enterococcus faecalis (strain ATCC 700802 / V583), this protein is Large ribosomal subunit protein uL16.